Consider the following 432-residue polypeptide: tRNA(Ile)-lysidine synthase (432 aa).

Residue Ser-19–Ser-24 coordinates ATP.

The protein belongs to the tRNA(Ile)-lysidine synthase family.

The protein resides in the cytoplasm. The enzyme catalyses cytidine(34) in tRNA(Ile2) + L-lysine + ATP = lysidine(34) in tRNA(Ile2) + AMP + diphosphate + H(+). In terms of biological role, ligates lysine onto the cytidine present at position 34 of the AUA codon-specific tRNA(Ile) that contains the anticodon CAU, in an ATP-dependent manner. Cytidine is converted to lysidine, thus changing the amino acid specificity of the tRNA from methionine to isoleucine. The chain is tRNA(Ile)-lysidine synthase from Staphylococcus epidermidis (strain ATCC 35984 / DSM 28319 / BCRC 17069 / CCUG 31568 / BM 3577 / RP62A).